Here is a 310-residue protein sequence, read N- to C-terminus: Porphobilinogen deaminase (310 aa).

The residue at position 241 (Cys241) is an S-(dipyrrolylmethanemethyl)cysteine.

This sequence belongs to the HMBS family. As to quaternary structure, monomer. The cofactor is dipyrromethane.

It carries out the reaction 4 porphobilinogen + H2O = hydroxymethylbilane + 4 NH4(+). The protein operates within porphyrin-containing compound metabolism; protoporphyrin-IX biosynthesis; coproporphyrinogen-III from 5-aminolevulinate: step 2/4. Its function is as follows. Tetrapolymerization of the monopyrrole PBG into the hydroxymethylbilane pre-uroporphyrinogen in several discrete steps. This Lysinibacillus sphaericus (strain C3-41) protein is Porphobilinogen deaminase.